We begin with the raw amino-acid sequence, 240 residues long: tRNA (guanine-N(1)-)-methyltransferase (240 aa).

S-adenosyl-L-methionine contacts are provided by residues Gly110 and 129–134 (LGDFVL).

Belongs to the RNA methyltransferase TrmD family. As to quaternary structure, homodimer.

It is found in the cytoplasm. It catalyses the reaction guanosine(37) in tRNA + S-adenosyl-L-methionine = N(1)-methylguanosine(37) in tRNA + S-adenosyl-L-homocysteine + H(+). In terms of biological role, specifically methylates guanosine-37 in various tRNAs. The sequence is that of tRNA (guanine-N(1)-)-methyltransferase from Clostridium botulinum (strain Loch Maree / Type A3).